The following is a 544-amino-acid chain: Cytochrome P450 monooxygenase verL (544 aa).

A helical transmembrane segment spans residues 3 to 23; the sequence is VALFPILPIGCLLIYIIFKLW. Residue Cys446 coordinates heme. Residues 520–544 form a disordered region; it reads QEKGIDGWKGKKESSSEENRGVSSR.

This sequence belongs to the cytochrome P450 family. The cofactor is heme.

The protein resides in the membrane. Its pathway is mycotoxin biosynthesis. Cytochrome P450 monooxygenase; part of the gene cluster that mediates the biosynthesis of 11'-deoxyverticillin A, one of the dimeric epipolythiodioxopiperazines (ETPs) from the verticillin family that act as mycotoxins. 11'-deoxyverticillin A is required for normal conidiation. The nonribosomal peptide synthetase verP is speculated to be responsible for condensation of amino acids to form the carbon skeleton of verticillin, whereas the cluster-specific tailoring enzymes are involved in further modifications leading to the production of 11'-deoxyverticillin A. The sequence is that of Cytochrome P450 monooxygenase verL from Clonostachys rogersoniana.